A 151-amino-acid polypeptide reads, in one-letter code: D-aminoacyl-tRNA deacylase (151 aa).

Positions 136–137 match the Gly-cisPro motif, important for rejection of L-amino acids motif; the sequence is GP.

It belongs to the DTD family. In terms of assembly, homodimer.

It localises to the cytoplasm. The catalysed reaction is glycyl-tRNA(Ala) + H2O = tRNA(Ala) + glycine + H(+). It carries out the reaction a D-aminoacyl-tRNA + H2O = a tRNA + a D-alpha-amino acid + H(+). Its function is as follows. An aminoacyl-tRNA editing enzyme that deacylates mischarged D-aminoacyl-tRNAs. Also deacylates mischarged glycyl-tRNA(Ala), protecting cells against glycine mischarging by AlaRS. Acts via tRNA-based rather than protein-based catalysis; rejects L-amino acids rather than detecting D-amino acids in the active site. By recycling D-aminoacyl-tRNA to D-amino acids and free tRNA molecules, this enzyme counteracts the toxicity associated with the formation of D-aminoacyl-tRNA entities in vivo and helps enforce protein L-homochirality. The polypeptide is D-aminoacyl-tRNA deacylase (Lactococcus lactis subsp. cremoris (strain SK11)).